The chain runs to 344 residues: Glycerol-3-phosphate dehydrogenase [NAD(P)+] (344 aa).

NADPH contacts are provided by Ser23, Tyr24, His44, and Lys118. Residues Lys118, Gly147, and Thr149 each coordinate sn-glycerol 3-phosphate. Ala151 contacts NADPH. Positions 203, 256, 266, 267, and 268 each coordinate sn-glycerol 3-phosphate. Lys203 serves as the catalytic Proton acceptor. Arg267 lines the NADPH pocket. Positions 291 and 293 each coordinate NADPH.

This sequence belongs to the NAD-dependent glycerol-3-phosphate dehydrogenase family.

Its subcellular location is the cytoplasm. The catalysed reaction is sn-glycerol 3-phosphate + NAD(+) = dihydroxyacetone phosphate + NADH + H(+). It catalyses the reaction sn-glycerol 3-phosphate + NADP(+) = dihydroxyacetone phosphate + NADPH + H(+). It participates in membrane lipid metabolism; glycerophospholipid metabolism. In terms of biological role, catalyzes the reduction of the glycolytic intermediate dihydroxyacetone phosphate (DHAP) to sn-glycerol 3-phosphate (G3P), the key precursor for phospholipid synthesis. This Vibrio cholerae serotype O1 (strain ATCC 39541 / Classical Ogawa 395 / O395) protein is Glycerol-3-phosphate dehydrogenase [NAD(P)+].